The following is a 135-amino-acid chain: Large ribosomal subunit protein eL32 (135 aa).

Belongs to the eukaryotic ribosomal protein eL32 family.

This Methanococcus maripaludis (strain C7 / ATCC BAA-1331) protein is Large ribosomal subunit protein eL32.